Consider the following 631-residue polypeptide: Phosphomethylpyrimidine synthase (631 aa).

Residues Asn-239, Met-268, Tyr-297, His-333, 353–355 (SRG), 394–397 (DGLR), and Glu-433 contribute to the substrate site. His-437 is a binding site for Zn(2+). Tyr-460 is a substrate binding site. Residue His-501 participates in Zn(2+) binding. Positions 581, 584, and 589 each coordinate [4Fe-4S] cluster.

Belongs to the ThiC family. In terms of assembly, homodimer. [4Fe-4S] cluster is required as a cofactor.

It carries out the reaction 5-amino-1-(5-phospho-beta-D-ribosyl)imidazole + S-adenosyl-L-methionine = 4-amino-2-methyl-5-(phosphooxymethyl)pyrimidine + CO + 5'-deoxyadenosine + formate + L-methionine + 3 H(+). The protein operates within cofactor biosynthesis; thiamine diphosphate biosynthesis. Functionally, catalyzes the synthesis of the hydroxymethylpyrimidine phosphate (HMP-P) moiety of thiamine from aminoimidazole ribotide (AIR) in a radical S-adenosyl-L-methionine (SAM)-dependent reaction. This is Phosphomethylpyrimidine synthase from Shigella sonnei (strain Ss046).